The following is a 664-amino-acid chain: UvrABC system protein B (664 aa).

The Helicase ATP-binding domain maps to 23–180 (EGLNRGMRFQ…EKLAKIGYQR (158 aa)). 36–43 (GVTGSGKT) contacts ATP. A Beta-hairpin motif is present at residues 89 to 112 (YYDYYQPEAYIPTKDLYIEKNADI). In terms of domain architecture, Helicase C-terminal spans 426–588 (QVDDLINEIV…ITPRSIVKPL (163 aa)). One can recognise a UVR domain in the interval 622 to 657 (EEYVALLEEEMYRAASELRYEDAAALRDELFRVKET).

It belongs to the UvrB family. In terms of assembly, forms a heterotetramer with UvrA during the search for lesions. Interacts with UvrC in an incision complex.

It is found in the cytoplasm. Functionally, the UvrABC repair system catalyzes the recognition and processing of DNA lesions. A damage recognition complex composed of 2 UvrA and 2 UvrB subunits scans DNA for abnormalities. Upon binding of the UvrA(2)B(2) complex to a putative damaged site, the DNA wraps around one UvrB monomer. DNA wrap is dependent on ATP binding by UvrB and probably causes local melting of the DNA helix, facilitating insertion of UvrB beta-hairpin between the DNA strands. Then UvrB probes one DNA strand for the presence of a lesion. If a lesion is found the UvrA subunits dissociate and the UvrB-DNA preincision complex is formed. This complex is subsequently bound by UvrC and the second UvrB is released. If no lesion is found, the DNA wraps around the other UvrB subunit that will check the other stand for damage. This chain is UvrABC system protein B, found in Thermotoga neapolitana (strain ATCC 49049 / DSM 4359 / NBRC 107923 / NS-E).